Reading from the N-terminus, the 62-residue chain is uncharacterized protein (62 aa).

This is an uncharacterized protein from Sinorhizobium fredii (strain NBRC 101917 / NGR234).